Here is a 70-residue protein sequence, read N- to C-terminus: MTIINSISSLGKISNKNKIQTNLLNSKNYSNNSPNNIQGSNENTGIVSGVLIIVGGLAIVLGLVTSSTGL.

It belongs to the UPF0519 family.

In Dictyostelium discoideum (Social amoeba), this protein is UPF0519 protein D.